The sequence spans 237 residues: Probable transcriptional regulatory protein Exig_1693 (237 aa).

It belongs to the TACO1 family. YeeN subfamily.

It is found in the cytoplasm. In Exiguobacterium sibiricum (strain DSM 17290 / CCUG 55495 / CIP 109462 / JCM 13490 / 255-15), this protein is Probable transcriptional regulatory protein Exig_1693.